We begin with the raw amino-acid sequence, 133 residues long: Putative redox protein FMP46, mitochondrial (133 aa).

The N-terminal 21 residues, 1–21 (MSFWKTLQRQPRTISLFTNDI), are a transit peptide targeting the mitochondrion. The active site involves Cys-97.

Belongs to the FMP46 family.

It is found in the mitochondrion. Functionally, putative mitochondrial redox protein which could be involved in the reduction of small toxic molecules. This chain is Putative redox protein FMP46, mitochondrial (FMP46), found in Saccharomyces cerevisiae (strain ATCC 204508 / S288c) (Baker's yeast).